Reading from the N-terminus, the 29-residue chain is Snaclec multactivase regulatory subunit (29 aa).

One can recognise a C-type lectin domain in the interval 1–29; the sequence is DCLPGWSVYEGRCYKVFNQKTWKAAEKFC. Cys2 and Cys13 are disulfide-bonded.

It belongs to the snaclec family. As to quaternary structure, heterodimer of a metalloproteinase subunit and a regulatory subunit comprising two homologous polypeptides disulfide-linked. In terms of tissue distribution, expressed by the venom gland.

It is found in the secreted. Multactivase, a carinactivase-like calcium-dependent prothrombin activator, activates prothrombin via recognition of the calcium ion bound conformation of its gamma-carboxyglutamic acid (GLA) domain, and the subsequent conversion of prothrombin to active thrombin is catalyzed by the catalytic subunit. This is Snaclec multactivase regulatory subunit from Echis multisquamatus (Central Asian sand viper).